Consider the following 263-residue polypeptide: Endonuclease 8 (263 aa).

The Schiff-base intermediate with DNA role is filled by Pro-2. Glu-3 functions as the Proton donor in the catalytic mechanism. The Proton donor; for beta-elimination activity role is filled by Lys-53. DNA contacts are provided by Gln-70, Arg-125, and Asn-169. Residues 229-263 (KVFHRDGEACERCGGIIEKTTLSSRPFYWCPHCQK) form an FPG-type zinc finger. Arg-253 acts as the Proton donor; for delta-elimination activity in catalysis.

It belongs to the FPG family. Requires Zn(2+) as cofactor.

It carries out the reaction 2'-deoxyribonucleotide-(2'-deoxyribose 5'-phosphate)-2'-deoxyribonucleotide-DNA = a 3'-end 2'-deoxyribonucleotide-(2,3-dehydro-2,3-deoxyribose 5'-phosphate)-DNA + a 5'-end 5'-phospho-2'-deoxyribonucleoside-DNA + H(+). Functionally, involved in base excision repair of DNA damaged by oxidation or by mutagenic agents. Acts as a DNA glycosylase that recognizes and removes damaged bases. Has a preference for oxidized pyrimidines, such as thymine glycol, 5,6-dihydrouracil and 5,6-dihydrothymine. Has AP (apurinic/apyrimidinic) lyase activity and introduces nicks in the DNA strand. Cleaves the DNA backbone by beta-delta elimination to generate a single-strand break at the site of the removed base with both 3'- and 5'-phosphates. The chain is Endonuclease 8 from Salmonella heidelberg (strain SL476).